A 207-amino-acid polypeptide reads, in one-letter code: 8-oxoguanine DNA glycosylase/AP lyase (207 aa).

Active-site residues include Lys-128 and Asp-146.

The protein belongs to the type-2 OGG1 family.

The enzyme catalyses 2'-deoxyribonucleotide-(2'-deoxyribose 5'-phosphate)-2'-deoxyribonucleotide-DNA = a 3'-end 2'-deoxyribonucleotide-(2,3-dehydro-2,3-deoxyribose 5'-phosphate)-DNA + a 5'-end 5'-phospho-2'-deoxyribonucleoside-DNA + H(+). Catalyzes the excision of an oxidatively damaged form of guanine (7,8-dihydro-8-oxoguanine = 8-oxoG) from DNA. Also cleaves the DNA backbone at apurinic/apyrimidinic sites (AP sites). The polypeptide is 8-oxoguanine DNA glycosylase/AP lyase (Saccharolobus islandicus (strain L.S.2.15 / Lassen #1) (Sulfolobus islandicus)).